A 380-amino-acid polypeptide reads, in one-letter code: MTEFTKLRWLLSAAGLVMYVADVCTDAALVLTYFKEKHVVCAALTLLFIVVGLLVTQVFSTAWYWDDMDCDEKREDMKTTLPVVSKRGLATLHLFGVGIFIRYYQMLKRGFGVAWGTVEPVEEIKNQQHFLFGLAADLSMLRLLEAFLESVPQLLLQLYIVLGQQECSLVQLVGMSFSFMNAAWALVDYRRCLRRSLPDVRQMPRGLPTAIYLLYKLFTITSRVLGYALLLIFSIYSTVGLAIVWLLGTAWTHRLHTDFCSSQSLEFLYRAIVGVILTFTFFNVKGQGTRDAMITYYFLHSLINVLSLLLLFVLRPDLLTLAALLCVSTLMAACSVLGLVCLVLYYLLLHPTEACREADEVDGLEIKTRSKGRLRDFLYP.

The next 8 membrane-spanning stretches (helical) occupy residues 10 to 30 (LLSAAGLVMYVADVCTDAALV), 39 to 59 (VVCAALTLLFIVVGLLVTQVF), 81 to 101 (LPVVSKRGLATLHLFGVGIFI), 167 to 187 (CSLVQLVGMSFSFMNAAWALV), 228 to 248 (ALLLIFSIYSTVGLAIVWLLG), 264 to 284 (SLEFLYRAIVGVILTFTFFNV), 294 to 314 (ITYYFLHSLINVLSLLLLFVL), and 329 to 349 (TLMAACSVLGLVCLVLYYLLL).

The protein belongs to the XK family.

It is found in the cell membrane. The catalysed reaction is a 1,2-diacyl-sn-glycero-3-phospho-L-serine(in) = a 1,2-diacyl-sn-glycero-3-phospho-L-serine(out). Its function is as follows. Phospholipid scramblase that promotes phosphatidylserine exposure on apoptotic cell surface. Phosphatidylserine is a specific marker only present at the surface of apoptotic cells and acts as a specific signal for engulfment. The sequence is that of XK-related protein 9 from Tetraodon nigroviridis (Spotted green pufferfish).